The chain runs to 120 residues: Flagellar protein FliT (120 aa).

The interval 1 to 50 is required for homodimerization; it reads MERHQHLLSEYQQILTLSEQMLMLATVENWNTLVDLEMTYLKAVENTANI. Positions 60-98 are fliD binding; the sequence is LQELLRQKLRSILENEIEIKRLLQRRLDKLSELVGQSTR.

Belongs to the FliT family. Homodimer. Interacts with FliD and FlhC.

The protein resides in the cytoplasm. Its subcellular location is the cytosol. Functionally, dual-function protein that regulates the transcription of class 2 flagellar operons and that also acts as an export chaperone for the filament-capping protein FliD. As a transcriptional regulator, acts as an anti-FlhDC factor; it directly binds FlhC, thus inhibiting the binding of the FlhC/FlhD complex to class 2 promoters, resulting in decreased expression of class 2 flagellar operons. As a chaperone, effects FliD transition to the membrane by preventing its premature polymerization, and by directing it to the export apparatus. This Yersinia pestis (strain Pestoides F) protein is Flagellar protein FliT.